The sequence spans 652 residues: Carboxypeptidase S1 homolog A (652 aa).

An N-terminal signal peptide occupies residues 1–19 (MRLAASIAVALPVIGAASA). Cysteine 50 and cysteine 121 are joined by a disulfide. N-linked (GlcNAc...) asparagine glycans are attached at residues asparagine 77, asparagine 132, asparagine 161, asparagine 168, asparagine 184, and asparagine 202. Serine 238 is a catalytic residue. N-linked (GlcNAc...) asparagine glycosylation is found at asparagine 260, asparagine 299, asparagine 347, and asparagine 410. Intrachain disulfides connect cysteine 325/cysteine 361 and cysteine 332/cysteine 354. Residue aspartate 458 is part of the active site. Cysteine 461 provides a ligand contact to substrate. N-linked (GlcNAc...) asparagine glycosylation is found at asparagine 474, asparagine 492, and asparagine 505. The active site involves histidine 516. Glutamate 517 serves as a coordination point for substrate. N-linked (GlcNAc...) asparagine glycosylation occurs at asparagine 594. A disordered region spans residues 608–628 (AASKGNPPPTTTSSPTASPTA). Positions 618–628 (TTSSPTASPTA) are enriched in low complexity. Glycine 629 carries GPI-anchor amidated glycine lipidation. A propeptide spans 630-652 (SAMLKAPVAMLAISALTVLAFYL) (removed in mature form).

It belongs to the peptidase S10 family.

The protein localises to the cell membrane. It carries out the reaction Preferential release of a C-terminal arginine or lysine residue.. Extracellular serine carboxypeptidase that contributes to pathogenicity. This is Carboxypeptidase S1 homolog A (SCPA) from Arthroderma benhamiae (strain ATCC MYA-4681 / CBS 112371) (Trichophyton mentagrophytes).